The sequence spans 112 residues: Large ribosomal subunit protein P1 (112 aa).

The disordered stretch occupies residues 80 to 112 (AAAAPAAESKKEEKKKEEESDQSDDDMGFGLFD). Residues 87–97 (ESKKEEKKKEE) show a composition bias toward basic and acidic residues. Residues S99 and S102 each carry the phosphoserine modification.

Belongs to the eukaryotic ribosomal protein P1/P2 family. In terms of assembly, P1 and P2 exist as dimers at the large ribosomal subunit.

Its function is as follows. Plays an important role in the elongation step of protein synthesis. The polypeptide is Large ribosomal subunit protein P1 (RpLP1) (Drosophila melanogaster (Fruit fly)).